The primary structure comprises 526 residues: tRNA modification GTPase MSS1, mitochondrial (526 aa).

The transit peptide at 1 to 19 directs the protein to the mitochondrion; sequence MNSASFLQSRLISRSFLVR. Residues 274 to 444 form the TrmE-type G domain; it reads GIKLVLLGAP…LISTLTSNFE (171 aa). GTP contacts are provided by residues 281–288, 328–332, and 394–397; these read GAPNVGKS, DTAGI, and NKSD.

The protein belongs to the TRAFAC class TrmE-Era-EngA-EngB-Septin-like GTPase superfamily. TrmE GTPase family. In terms of assembly, forms a heterodimer with MTO1.

Its subcellular location is the mitochondrion. GTPase involved in the 5-carboxymethylaminomethyl modification (mnm(5)s(2)U34) of the wobble uridine base in mitochondrial tRNAs. Involved in the expression of cytochrome c oxidase subunit 1 (COX1). Works in association with the small subunit of mitoribosomes. This is tRNA modification GTPase MSS1, mitochondrial (MSS1) from Saccharomyces cerevisiae (strain ATCC 204508 / S288c) (Baker's yeast).